Here is a 309-residue protein sequence, read N- to C-terminus: uncharacterized protein (309 aa).

Belongs to the OprB family.

This is an uncharacterized protein from Aquifex aeolicus (strain VF5).